Consider the following 147-residue polypeptide: TRAF-interacting protein with FHA domain-containing protein B (147 aa).

An FHA domain is found at Leu36–Ser108.

Interacts with TIFA.

In terms of biological role, inhibits TIFA-mediated TRAF6 activation possibly by inducing a conformational change in TIFA. The polypeptide is TRAF-interacting protein with FHA domain-containing protein B (Rattus norvegicus (Rat)).